Here is a 348-residue protein sequence, read N- to C-terminus: DnaJ homolog subfamily B member 5 (348 aa).

The region spanning 4 to 68 is the J domain; the sequence is DYYKILGIPS…KKRGLYDQYG (65 aa).

This chain is DnaJ homolog subfamily B member 5 (DNAJB5), found in Homo sapiens (Human).